A 260-amino-acid chain; its full sequence is NAD-capped RNA hydrolase NudC (260 aa).

R69 provides a ligand contact to substrate. Zn(2+) is bound by residues C98 and C101. Substrate is bound at residue E111. Zn(2+)-binding residues include C116 and C119. Y124 serves as a coordination point for substrate. The Nudix hydrolase domain maps to 125-248 (PQIAPCIIVA…TVARRLIEDT (124 aa)). Positions 158, 174, and 178 each coordinate a divalent metal cation. A Nudix box motif is present at residues 159-180 (GFVEVGETLEQTVVREVMEESQ). 192–199 (QPWPFPHS) is a binding site for substrate. E219 lines the a divalent metal cation pocket. A241 contacts substrate.

It belongs to the Nudix hydrolase family. NudC subfamily. Homodimer. Mg(2+) is required as a cofactor. Requires Mn(2+) as cofactor. Zn(2+) serves as cofactor.

The catalysed reaction is a 5'-end NAD(+)-phospho-ribonucleoside in mRNA + H2O = a 5'-end phospho-adenosine-phospho-ribonucleoside in mRNA + beta-nicotinamide D-ribonucleotide + 2 H(+). It carries out the reaction NAD(+) + H2O = beta-nicotinamide D-ribonucleotide + AMP + 2 H(+). The enzyme catalyses NADH + H2O = reduced beta-nicotinamide D-ribonucleotide + AMP + 2 H(+). Functionally, mRNA decapping enzyme that specifically removes the nicotinamide adenine dinucleotide (NAD) cap from a subset of mRNAs by hydrolyzing the diphosphate linkage to produce nicotinamide mononucleotide (NMN) and 5' monophosphate mRNA. The NAD-cap is present at the 5'-end of some mRNAs and stabilizes RNA against 5'-processing. Has preference for mRNAs with a 5'-end purine. Catalyzes the hydrolysis of a broad range of dinucleotide pyrophosphates. This chain is NAD-capped RNA hydrolase NudC, found in Pectobacterium atrosepticum (strain SCRI 1043 / ATCC BAA-672) (Erwinia carotovora subsp. atroseptica).